The following is a 360-amino-acid chain: 3-dehydroquinate synthase (360 aa).

NAD(+)-binding positions include 71 to 76 (DGEQYK), 105 to 109 (GVVGD), 129 to 130 (TT), Lys-142, Lys-151, and 169 to 172 (TLNT). Residues Glu-184, His-248, and His-265 each coordinate Zn(2+).

It belongs to the sugar phosphate cyclases superfamily. Dehydroquinate synthase family. The cofactor is Co(2+). Zn(2+) serves as cofactor. Requires NAD(+) as cofactor.

The protein localises to the cytoplasm. It carries out the reaction 7-phospho-2-dehydro-3-deoxy-D-arabino-heptonate = 3-dehydroquinate + phosphate. It participates in metabolic intermediate biosynthesis; chorismate biosynthesis; chorismate from D-erythrose 4-phosphate and phosphoenolpyruvate: step 2/7. In terms of biological role, catalyzes the conversion of 3-deoxy-D-arabino-heptulosonate 7-phosphate (DAHP) to dehydroquinate (DHQ). The polypeptide is 3-dehydroquinate synthase (Coxiella burnetii (strain CbuK_Q154) (Coxiella burnetii (strain Q154))).